The sequence spans 277 residues: NLP effector protein Pc109095 (277 aa).

The first 19 residues, 1–19, serve as a signal peptide directing secretion; sequence MKFIFAFVLCLAVAQTALG. The short motif at 119–125 is the Hepta-peptide GHRHDWE motif element; sequence RSRHLWA. The N-linked (GlcNAc...) asparagine glycan is linked to asparagine 199.

It belongs to the Necrosis inducing protein (NPP1) family.

It localises to the secreted. Secreted effector that contributes strongly to virulence during infection by P.capsici. The sequence is that of NLP effector protein Pc109095 from Phytophthora capsici.